Consider the following 107-residue polypeptide: Large ribosomal subunit protein uL24 (107 aa).

The protein belongs to the universal ribosomal protein uL24 family. As to quaternary structure, part of the 50S ribosomal subunit.

In terms of biological role, one of two assembly initiator proteins, it binds directly to the 5'-end of the 23S rRNA, where it nucleates assembly of the 50S subunit. Functionally, one of the proteins that surrounds the polypeptide exit tunnel on the outside of the subunit. The protein is Large ribosomal subunit protein uL24 of Pelotomaculum thermopropionicum (strain DSM 13744 / JCM 10971 / SI).